The chain runs to 585 residues: Epithelial sodium channel subunit gamma (585 aa).

Residues 1-55 are Cytoplasmic-facing; it reads MAPGEKIKAKIKKNLPVTGPQAPTIKELMRWYCLNTNTHGCRRIVVSRGRLRRLL. A helical transmembrane segment spans residues 56–76; sequence WIGFTLTAVALILWQCALLVF. Residues 77–477 are Extracellular-facing; the sequence is SFYTVSVSIK…GGQLGLWMSC (401 aa). 6 disulfides stabilise this stretch: Cys100-Cys219, Cys308-Cys393, Cys330-Cys389, Cys334-Cys385, Cys343-Cys370, and Cys345-Cys359. Asn207 is a glycosylation site (N-linked (GlcNAc...) asparagine). N-linked (GlcNAc...) asparagine glycosylation is present at Asn433. The chain crosses the membrane as a helical span at residues 478 to 498; it reads SVVCVIEIIEVFFIDFFSIIA. Topologically, residues 499 to 585 are cytoplasmic; sequence RRQWQKAKEW…LTDTQMLDEL (87 aa). Residues 513 to 534 are disordered; sequence QAPPCPEAPRSPQGQDNPALDI. The short motif at 559–563 is the PY motif; recruits WW domain-containing proteins and is thereby required for ubiquitination and inhibition of the channel by NEDD4 and NEDD4L element; that stretch reads PPPKY.

The protein belongs to the amiloride-sensitive sodium channel (TC 1.A.6) family. SCNN1G subfamily. In terms of assembly, component of the heterotrimeric epithelial sodium channel (ENaC) composed of an alpha/SCNN1A, a beta/SCNN1B and a gamma/SCNN1G subunit. An additional delta/SCNN1D subunit can replace the alpha/SCNN1A subunit to form an alternative channel with specific properties. Interacts with WWP1 (via WW domains). Interacts with WWP2 (via WW domains); inhibits the channel. Interacts with the full-length immature form of PCSK9 (pro-PCSK9); inhibits ENaC by promoting its proteasomal degradation. Interacts with BPIFA1; the interaction is indirect via SCNN1B and inhibits the proteolytic maturation of SCNN1A and SCNN1G and the activation of ENaC. In terms of processing, phosphorylated on serine and threonine residues. Aldosterone and insulin increase the basal level of phosphorylation. Ubiquitinated. Can be ubiquitinated at multiple sites and undergo monoubiquitination and polyubiquitination. Ubiquitination by NEDD4 or NEDD4L inhibits the ENaC channel through endocytosis, intracellular retention and degradation of its individual subunits. Post-translationally, ENaC is activated through the proteolytic maturation of its subunits. Furin cleaves the SCNN1G subunit first, followed by cleavage by prostasin (PRSS8), which results in a stepwise increase in the open probability of the channel due to the release of an inhibitory tract. BPIFA1, which is recruited by the SCNN1B subunit, prevents the proteolytic activation of ENaC. In terms of processing, N-glycosylated. N-linked glycans are processed to complex type during ENaC complex assembly and transport to the plasma membrane.

The protein resides in the apical cell membrane. It catalyses the reaction Na(+)(in) = Na(+)(out). Originally identified and characterized by its inhibition by the diuretic drug amiloride. This is one of the three pore-forming subunits of the heterotrimeric epithelial sodium channel (ENaC), a critical regulator of sodium balance and fluid homeostasis. ENaC operates in epithelial tissues, where it mediates the electrodiffusion of sodium ions from extracellular fluid through the apical membrane of cells, with water following osmotically. It plays a key role in maintaining sodium homeostasis through electrogenic sodium reabsorption in the kidneys. Additionally, ENaC is essential for airway surface liquid homeostasis, which is crucial for proper mucus clearance. In Pan troglodytes (Chimpanzee), this protein is Epithelial sodium channel subunit gamma.